We begin with the raw amino-acid sequence, 428 residues long: Histidine--tRNA ligase (428 aa).

It belongs to the class-II aminoacyl-tRNA synthetase family. Homodimer.

Its subcellular location is the cytoplasm. The enzyme catalyses tRNA(His) + L-histidine + ATP = L-histidyl-tRNA(His) + AMP + diphosphate + H(+). This chain is Histidine--tRNA ligase, found in Lactobacillus gasseri (strain ATCC 33323 / DSM 20243 / BCRC 14619 / CIP 102991 / JCM 1131 / KCTC 3163 / NCIMB 11718 / NCTC 13722 / AM63).